Reading from the N-terminus, the 379-residue chain is Chaperone protein DnaJ (379 aa).

Residues 6-71 (DYYEVLGVDK…QKRSRYDQFG (66 aa)) enclose the J domain. The segment at 138–220 (GVEREINVSK…CNGKGRLRST (83 aa)) adopts a CR-type zinc-finger fold. Residues C151, C154, C168, C171, C194, C197, C208, and C211 each coordinate Zn(2+). CXXCXGXG motif repeat units follow at residues 151–158 (CSKCTGSG), 168–175 (CNHCNGTG), 194–201 (CDACKGEG), and 208–215 (CPACNGKG).

This sequence belongs to the DnaJ family. Homodimer. Requires Zn(2+) as cofactor.

It is found in the cytoplasm. Participates actively in the response to hyperosmotic and heat shock by preventing the aggregation of stress-denatured proteins and by disaggregating proteins, also in an autonomous, DnaK-independent fashion. Unfolded proteins bind initially to DnaJ; upon interaction with the DnaJ-bound protein, DnaK hydrolyzes its bound ATP, resulting in the formation of a stable complex. GrpE releases ADP from DnaK; ATP binding to DnaK triggers the release of the substrate protein, thus completing the reaction cycle. Several rounds of ATP-dependent interactions between DnaJ, DnaK and GrpE are required for fully efficient folding. Also involved, together with DnaK and GrpE, in the DNA replication of plasmids through activation of initiation proteins. This is Chaperone protein DnaJ from Ruminiclostridium cellulolyticum (strain ATCC 35319 / DSM 5812 / JCM 6584 / H10) (Clostridium cellulolyticum).